A 72-amino-acid polypeptide reads, in one-letter code: Translation initiation factor IF-1 (72 aa).

The 72-residue stretch at 1–72 folds into the S1-like domain; sequence MAKEDCIEME…TKGRIKFRSK (72 aa).

Belongs to the IF-1 family. In terms of assembly, component of the 30S ribosomal translation pre-initiation complex which assembles on the 30S ribosome in the order IF-2 and IF-3, IF-1 and N-formylmethionyl-tRNA(fMet); mRNA recruitment can occur at any time during PIC assembly.

The protein resides in the cytoplasm. Its function is as follows. One of the essential components for the initiation of protein synthesis. Stabilizes the binding of IF-2 and IF-3 on the 30S subunit to which N-formylmethionyl-tRNA(fMet) subsequently binds. Helps modulate mRNA selection, yielding the 30S pre-initiation complex (PIC). Upon addition of the 50S ribosomal subunit IF-1, IF-2 and IF-3 are released leaving the mature 70S translation initiation complex. The chain is Translation initiation factor IF-1 from Francisella tularensis subsp. tularensis (strain WY96-3418).